We begin with the raw amino-acid sequence, 270 residues long: Formamidopyrimidine-DNA glycosylase (270 aa).

The active-site Schiff-base intermediate with DNA is P2. E3 functions as the Proton donor in the catalytic mechanism. The active-site Proton donor; for beta-elimination activity is the K58. H91, R110, and K151 together coordinate DNA. The FPG-type zinc finger occupies 236 to 270 (LVYGKAGAPCTECNTPLKEIRMNNRSTVYCPRCQR). R260 serves as the catalytic Proton donor; for delta-elimination activity.

This sequence belongs to the FPG family. In terms of assembly, monomer. Zn(2+) serves as cofactor.

It catalyses the reaction Hydrolysis of DNA containing ring-opened 7-methylguanine residues, releasing 2,6-diamino-4-hydroxy-5-(N-methyl)formamidopyrimidine.. It carries out the reaction 2'-deoxyribonucleotide-(2'-deoxyribose 5'-phosphate)-2'-deoxyribonucleotide-DNA = a 3'-end 2'-deoxyribonucleotide-(2,3-dehydro-2,3-deoxyribose 5'-phosphate)-DNA + a 5'-end 5'-phospho-2'-deoxyribonucleoside-DNA + H(+). Functionally, involved in base excision repair of DNA damaged by oxidation or by mutagenic agents. Acts as a DNA glycosylase that recognizes and removes damaged bases. Has a preference for oxidized purines, such as 7,8-dihydro-8-oxoguanine (8-oxoG). Has AP (apurinic/apyrimidinic) lyase activity and introduces nicks in the DNA strand. Cleaves the DNA backbone by beta-delta elimination to generate a single-strand break at the site of the removed base with both 3'- and 5'-phosphates. This is Formamidopyrimidine-DNA glycosylase from Marinobacter nauticus (strain ATCC 700491 / DSM 11845 / VT8) (Marinobacter aquaeolei).